A 275-amino-acid chain; its full sequence is Transmembrane protein 106B (275 aa).

The segment at 1 to 24 is disordered; it reads MGKSFSHLPLHSNKEDGYDGMTST. Gly-2 carries the N-myristoyl glycine lipid modification. Over 2 to 97 the chain is Cytoplasmic; sequence GKSFSHLPLH…QRLRPRRTKL (96 aa). A helical transmembrane segment spans residues 98–118; sequence YVMASVFVCLLLSGLAVFFLF. Residues 119 to 275 lie on the Lumenal side of the membrane; it reads PRSIDVKYIG…EYLNVLQPQQ (157 aa). N-linked (GlcNAc...) asparagine glycans are attached at residues Asn-146, Asn-152, Asn-165, and Asn-184. Cysteines 215 and 254 form a disulfide. An N-linked (GlcNAc...) asparagine glycan is attached at Asn-257.

It belongs to the TMEM106 family. Can form homomers. Interacts (via N-terminus) with MAP6 (via C-terminus). Interacts (via C-terminus) with the vacuolar-type ATPase subunit ATP6AP1. Interacts (via N-terminus) with AP2M1 and CLTC. Interacts with TMEM106C.

It is found in the late endosome membrane. It localises to the lysosome membrane. The protein resides in the cell membrane. In neurons, involved in the transport of late endosomes/lysosomes. May be involved in dendrite morphogenesis and maintenance by regulating lysosomal trafficking. May act as a molecular brake for retrograde transport of late endosomes/lysosomes, possibly via its interaction with MAP6. In motoneurons, may mediate the axonal transport of lysosomes and axonal sorting at the initial segment. It remains unclear whether TMEM106B affects the transport of moving lysosomes in the anterograde or retrograde direction in neurites and whether it is particularly important in the sorting of lysosomes in axons or in dendrites. In neurons, may also play a role in the regulation of lysosomal size and responsiveness to stress. Required for proper lysosomal acidification. The sequence is that of Transmembrane protein 106B (TMEM106B) from Bos taurus (Bovine).